The following is a 60-amino-acid chain: Large ribosomal subunit protein uL30 (60 aa).

The protein belongs to the universal ribosomal protein uL30 family. In terms of assembly, part of the 50S ribosomal subunit.

The sequence is that of Large ribosomal subunit protein uL30 from Symbiobacterium thermophilum (strain DSM 24528 / JCM 14929 / IAM 14863 / T).